Reading from the N-terminus, the 401-residue chain is Probable [pyruvate dehydrogenase (acetyl-transferring)] kinase, mitochondrial (401 aa).

A Histidine kinase domain is found at 131 to 360 (LIELRESDGV…DACIYLKAVP (230 aa)). Residues 247-254 (ELFKNAMR), aspartate 286, 305-306 (ST), and 321-326 (GYGYGL) contribute to the ATP site.

It belongs to the PDK/BCKDK protein kinase family.

Its subcellular location is the mitochondrion matrix. The enzyme catalyses L-seryl-[pyruvate dehydrogenase E1 alpha subunit] + ATP = O-phospho-L-seryl-[pyruvate dehydrogenase E1 alpha subunit] + ADP + H(+). Inhibits the mitochondrial pyruvate dehydrogenase complex by phosphorylation of the E1 alpha subunit, thus contributing to the regulation of glucose metabolism. Required for normal lifespan. The protein is Probable [pyruvate dehydrogenase (acetyl-transferring)] kinase, mitochondrial (pdhk-2) of Caenorhabditis elegans.